Here is a 122-residue protein sequence, read N- to C-terminus: NADH-quinone oxidoreductase subunit A (122 aa).

Helical transmembrane passes span methionine 10–glycine 30, isoleucine 66–valine 86, and leucine 91–alanine 111.

The protein belongs to the complex I subunit 3 family. In terms of assembly, NDH-1 is composed of 14 different subunits. Subunits NuoA, H, J, K, L, M, N constitute the membrane sector of the complex.

Its subcellular location is the cell membrane. The catalysed reaction is a quinone + NADH + 5 H(+)(in) = a quinol + NAD(+) + 4 H(+)(out). In terms of biological role, NDH-1 shuttles electrons from NADH, via FMN and iron-sulfur (Fe-S) centers, to quinones in the respiratory chain. The immediate electron acceptor for the enzyme in this species is believed to be a menaquinone. Couples the redox reaction to proton translocation (for every two electrons transferred, four hydrogen ions are translocated across the cytoplasmic membrane), and thus conserves the redox energy in a proton gradient. The chain is NADH-quinone oxidoreductase subunit A from Bacillus cytotoxicus (strain DSM 22905 / CIP 110041 / 391-98 / NVH 391-98).